The chain runs to 42 residues: uncharacterized protein (42 aa).

This is an uncharacterized protein from Saccharomyces cerevisiae (strain ATCC 204508 / S288c) (Baker's yeast).